The following is a 366-amino-acid chain: Phospho-N-acetylmuramoyl-pentapeptide-transferase (366 aa).

The next 10 membrane-spanning stretches (helical) occupy residues 27–47 (GAAI…ISLL), 76–96 (PTMG…IWVI), 101–121 (FFWL…WDDF), 136–156 (IKLL…LADP), 176–196 (IDIG…SSNA), 205–225 (GLAA…SYIS), 241–261 (GAGE…GFLW), 264–284 (CYPA…SALG), 285–305 (VVAI…IFVI), and 343–363 (AVTV…LSSL).

The protein belongs to the glycosyltransferase 4 family. MraY subfamily. Requires Mg(2+) as cofactor.

The protein localises to the cell inner membrane. The enzyme catalyses UDP-N-acetyl-alpha-D-muramoyl-L-alanyl-gamma-D-glutamyl-meso-2,6-diaminopimeloyl-D-alanyl-D-alanine + di-trans,octa-cis-undecaprenyl phosphate = di-trans,octa-cis-undecaprenyl diphospho-N-acetyl-alpha-D-muramoyl-L-alanyl-D-glutamyl-meso-2,6-diaminopimeloyl-D-alanyl-D-alanine + UMP. It functions in the pathway cell wall biogenesis; peptidoglycan biosynthesis. Functionally, catalyzes the initial step of the lipid cycle reactions in the biosynthesis of the cell wall peptidoglycan: transfers peptidoglycan precursor phospho-MurNAc-pentapeptide from UDP-MurNAc-pentapeptide onto the lipid carrier undecaprenyl phosphate, yielding undecaprenyl-pyrophosphoryl-MurNAc-pentapeptide, known as lipid I. The polypeptide is Phospho-N-acetylmuramoyl-pentapeptide-transferase (Methylacidiphilum infernorum (isolate V4) (Methylokorus infernorum (strain V4))).